We begin with the raw amino-acid sequence, 105 residues long: Heat shock protein HspQ (105 aa).

The protein belongs to the HspQ family.

The protein localises to the cytoplasm. In terms of biological role, involved in the degradation of certain denaturated proteins, including DnaA, during heat shock stress. The polypeptide is Heat shock protein HspQ (Baumannia cicadellinicola subsp. Homalodisca coagulata).